A 649-amino-acid chain; its full sequence is Glucan endo-1,3-beta-glucosidase btgC (649 aa).

2 disordered regions span residues 1–50 (MGDR…AHTH) and 110–224 (YHTT…AGGA). At 1–274 (MGDRSEQYGD…PRPSGASRKR (274 aa)) the chain is on the cytoplasmic side. Over residues 144-157 (GSSAALSAAGAPAG) the composition is skewed to low complexity. A compositionally biased stretch (acidic residues) spans 198–208 (NPDDILDDGDD). A helical; Signal-anchor for type II membrane protein transmembrane segment spans residues 275 to 295 (GWIIGGILAFIVIGAIVGGAV). Residues 296–649 (GGTLGNRRSE…IPDCGGKTAA (354 aa)) are Extracellular-facing. The interval 301–329 (NRRSETASESSEVSADDDTETNGDLDKNS) is disordered. Residues 314 to 323 (SADDDTETNG) are compositionally biased toward acidic residues. Residues asparagine 369, asparagine 392, and asparagine 420 are each glycosylated (N-linked (GlcNAc...) asparagine). Glutamate 452 functions as the Proton donor in the catalytic mechanism. Glutamate 551 acts as the Nucleophile in catalysis. Asparagine 596 is a glycosylation site (N-linked (GlcNAc...) asparagine).

The protein belongs to the glycosyl hydrolase 17 family.

Its subcellular location is the cell membrane. The enzyme catalyses Hydrolysis of (1-&gt;3)-beta-D-glucosidic linkages in (1-&gt;3)-beta-D-glucans.. Its function is as follows. Glucanases play a role in cell expansion during growth, in cell-cell fusion during mating, and in spore release during sporulation. This enzyme may be involved in beta-glucan degradation. Active on laminarin and lichenan. The protein is Glucan endo-1,3-beta-glucosidase btgC (btgC) of Emericella nidulans (strain FGSC A4 / ATCC 38163 / CBS 112.46 / NRRL 194 / M139) (Aspergillus nidulans).